Consider the following 316-residue polypeptide: Transaldolase (316 aa).

Lys-125 functions as the Schiff-base intermediate with substrate in the catalytic mechanism.

This sequence belongs to the transaldolase family. Type 1 subfamily. As to quaternary structure, homodimer.

The protein resides in the cytoplasm. The enzyme catalyses D-sedoheptulose 7-phosphate + D-glyceraldehyde 3-phosphate = D-erythrose 4-phosphate + beta-D-fructose 6-phosphate. Its pathway is carbohydrate degradation; pentose phosphate pathway; D-glyceraldehyde 3-phosphate and beta-D-fructose 6-phosphate from D-ribose 5-phosphate and D-xylulose 5-phosphate (non-oxidative stage): step 2/3. Its function is as follows. Transaldolase is important for the balance of metabolites in the pentose-phosphate pathway. This chain is Transaldolase, found in Acidovorax ebreus (strain TPSY) (Diaphorobacter sp. (strain TPSY)).